A 473-amino-acid chain; its full sequence is Dynein axonemal assembly factor 11 (473 aa).

LRR repeat units lie at residues 22 to 43, 45 to 66, 67 to 88, and 89 to 110; these read SLEELSLHQQEIERLEHIDKWC, DLKILYLQNNLIGKIENVSKLK, KLEYLNLALNNIERIENLEGCE, and WLTKLDLTVNFIGELSSVKTLT. Positions 123–161 constitute an LRRCT domain; the sequence is NPCADFDGYRQFVVVTLQQLKWLDGKEIERSERIQALQN. The stretch at 153–205 forms a coiled coil; the sequence is SERIQALQNYTSVEQQIREQEKAYCLRRAKEKEEAQRKLEEENESEDKKKSST. 2 stretches are compositionally biased toward basic and acidic residues: residues 188–202 and 273–283; these read QRKLEEENESEDKKK and EKQRKAQDKLS. Disordered stretches follow at residues 188-244, 273-292, and 387-473; these read QRKL…TKES, EKQRKAQDKLSEKKKKAKPP, and VGEM…PPLI. Residues 305–402 form the CS domain; sequence VNEAKLDFSL…GGQRTPTSVK (98 aa). A compositionally biased stretch (low complexity) spans 397–408; the sequence is TPTSVKTTSTSS. The span at 417–431 shows a compositional bias: basic and acidic residues; it reads KQIERLEVDPSKHSC. The segment covering 456-467 has biased composition (acidic residues); it reads PSEEDPDFEDNP.

The protein belongs to the tilB family. As to quaternary structure, interacts (via CS domain) with ZMYND10 (via C-terminus). In terms of tissue distribution, mainly expressed in cells with motile cilia. Expressed in epithelial cells of the trachea, testis and ependymal cells of the cerebral ventricles. In testis, abundant expression in late prophase of meiosis I with a dramatic decrease after the first meiotic division (at protein level).

It localises to the cytoplasm. The protein localises to the cell projection. The protein resides in the cilium. Its subcellular location is the dynein axonemal particle. It is found in the flagellum. Functionally, involved in dynein arm assembly, is important for expression and transporting outer dynein arm (ODA) proteins from the cytoplasm to the cilia. Acts as a crucial component in the formation and motility of spermatozoal flagella. The protein is Dynein axonemal assembly factor 11 (Dnaaf11) of Mus musculus (Mouse).